A 937-amino-acid polypeptide reads, in one-letter code: Hyphally-regulated protein (937 aa).

A signal peptide spans 1 to 20 (MKVVSNFIFTILLTLNLSAA). N-linked (GlcNAc...) asparagine glycosylation occurs at asparagine 16. The chain crosses the membrane as a helical span at residues 42-62 (VHSGATWAILGTTLCSFFGGL). Asparagine 236 carries an N-linked (GlcNAc...) asparagine glycan. A disordered region spans residues 332–483 (SAPESESDLN…QSITSSPGQS (152 aa)). Low complexity predominate over residues 344–392 (TTSSIETSSYSSAATESSVVSESSSAVDSLTSSSLSSKSESSDVVSSTT). The segment covering 393 to 414 (NIESSSTAIETTMNSESSTDAG) has biased composition (polar residues). Positions 415–475 (SSSISQSESS…SNALSSTEQS (61 aa)) are enriched in low complexity. Asparagine 449, asparagine 488, asparagine 580, asparagine 585, asparagine 595, and asparagine 603 each carry an N-linked (GlcNAc...) asparagine glycan. Low complexity predominate over residues 567–590 (DATTTTTTSTGGDNSTGGNESGSN). Residues 567 to 857 (DATTTTTTST…VANPVTTSTE (291 aa)) form a disordered region. Residues 591-609 (HGPGNGSTEGSGNGSGAGS) are compositionally biased toward gly residues. Repeat unit 1 spans residues 610–613 (NEGS). The tract at residues 610-753 (NEGSQSGPNN…GAGNGSNEGS (144 aa)) is 7 X 4 AA repeats of N-E-G-S. N-linked (GlcNAc...) asparagine glycosylation is found at asparagine 619, asparagine 631, asparagine 641, and asparagine 649. Gly residues-rich tracts occupy residues 619-631 (NGSG…GSNN) and 641-665 (NGSG…GSGS). A run of 4 repeats spans residues 666–669 (NEGS), 680–683 (NEGS), 690–693 (NEGS), and 698–701 (NEGS). Positions 666–682 (NEGSQSGSGSQPGPNEG) are enriched in low complexity. Residues 699-725 (EGSGSGSGSGSNNGSGSGSQSGSGSGS) show a composition bias toward gly residues. Asparagine 711 carries an N-linked (GlcNAc...) asparagine glycan. Positions 726–742 (QSGSESGSNSGSNEGSN) are enriched in low complexity. Copy 6 of the repeat occupies 738-741 (NEGS). A compositionally biased stretch (gly residues) spans 743-801 (PGAGNGSNEGSGQGSGNGSEAGSGQGSGPNNGSGSGHNDGSGSGSNQGSNPGAGSGSGS). Asparagine 747 carries an N-linked (GlcNAc...) asparagine glycan. Repeat 7 spans residues 750–753 (NEGS). N-linked (GlcNAc...) asparagine glycans are attached at residues asparagine 759 and asparagine 773. The segment covering 802–814 (ESGSKAGSHSGSN) has biased composition (low complexity). Residues 817-829 (AKTDSIEGFHTES) show a composition bias toward basic and acidic residues. Positions 841–851 (ATVTGNSVANP) are enriched in polar residues. Asparagine 897 and asparagine 913 each carry an N-linked (GlcNAc...) asparagine glycan. Asparagine 913 is lipidated: GPI-anchor amidated asparagine. Positions 914 to 937 (GSSIVTGGKSILFGLIVSMVVLFM) are cleaved as a propeptide — removed in mature form.

It localises to the cell membrane. The protein localises to the secreted. It is found in the cell wall. In terms of biological role, nonessential component of the hyphal cell wall. In Candida albicans (Yeast), this protein is Hyphally-regulated protein (HYR1).